The sequence spans 294 residues: Type I ribosome-inactivating protein trichoanguina (294 aa).

An N-terminal signal peptide occupies residues 1–19 (MALSFFFLAISLGSPTAIG). An N-linked (GlcNAc...) asparagine glycan is attached at asparagine 70. Active-site residues include glutamate 177 and arginine 180. N-linked (GlcNAc...) asparagine glycosylation is present at asparagine 220. Positions 265-294 (VGSEYDIPTTILHPGAMGMLHNQNGNYVTM) are excised as a propeptide.

This sequence belongs to the ribosome-inactivating protein family. Type 1 RIP subfamily.

The catalysed reaction is Endohydrolysis of the N-glycosidic bond at one specific adenosine on the 28S rRNA.. Its function is as follows. Inhibits protein synthesis by depurinating 28S rRNA in ribosomes. In Trichosanthes anguina (Snake gourd), this protein is Type I ribosome-inactivating protein trichoanguina (TCA).